Reading from the N-terminus, the 114-residue chain is Peroxisomal biogenesis factor 39 (114 aa).

2 disordered regions span residues 1 to 26 and 53 to 114; these read MSWW…AEPA and ITAT…PRVS. S102 carries the post-translational modification Phosphoserine.

The protein resides in the peroxisome. Functionally, may be a peroxin involved in the PTS2-mediated protein import pathway. In Mus musculus (Mouse), this protein is Peroxisomal biogenesis factor 39 (Pex39).